Here is an 858-residue protein sequence, read N- to C-terminus: Coiled-coil and C2 domain-containing protein 1B (858 aa).

Disordered regions lie at residues 112 to 164, 180 to 199, 204 to 284, 329 to 352, and 470 to 533; these read VLGV…GASQ, AAASAKEAGEAAKARRCERG, ESQL…ALLS, VDLSAMPPAPEDLKPQQASQAPTA, and EKLA…SPSV. Residues 114–143 show a composition bias toward acidic residues; the sequence is GVDEETEPLDGDEVADPGGSEEENGLEDTE. Positions 153–164 are enriched in low complexity; it reads ASAPAAQAGASQ. The stretch at 166-212 forms a coiled coil; the sequence is LHALLEERIHNYREAAASAKEAGEAAKARRCERGLKTLESQLASVRR. Basic and acidic residues predominate over residues 186–199; the sequence is EAGEAAKARRCERG. Residue serine 209 is modified to Phosphoserine. A compositionally biased stretch (low complexity) spans 520 to 532; it reads PRASSSKESPSPS. Phosphoserine is present on serine 593. Threonine 596 is subject to Phosphothreonine. Positions 611 to 635 form a coiled coil; the sequence is RLSQKAEEVYAQLQKMLLEQQEKCL. The C2 domain maps to 676–815; the sequence is DPPTHHFELK…ENECEIREIV (140 aa).

It belongs to the CC2D1 family. Interacts with CHMP4B. Widely distributed in brain and peripheral tissues.

Its subcellular location is the nucleus. Its function is as follows. Transcription factor that binds specifically to the DRE (dual repressor element) and represses HTR1A gene transcription in neuronal cells. The sequence is that of Coiled-coil and C2 domain-containing protein 1B (CC2D1B) from Homo sapiens (Human).